The following is a 417-amino-acid chain: Tol-Pal system protein TolB (417 aa).

The signal sequence occupies residues 1–16 (MRYLWLFLIGTIGLFA).

It belongs to the TolB family. As to quaternary structure, the Tol-Pal system is composed of five core proteins: the inner membrane proteins TolA, TolQ and TolR, the periplasmic protein TolB and the outer membrane protein Pal. They form a network linking the inner and outer membranes and the peptidoglycan layer.

It localises to the periplasm. Functionally, part of the Tol-Pal system, which plays a role in outer membrane invagination during cell division and is important for maintaining outer membrane integrity. This Helicobacter pylori (strain HPAG1) protein is Tol-Pal system protein TolB.